Reading from the N-terminus, the 438-residue chain is Lipid-A-disaccharide synthase (438 aa).

The protein belongs to the LpxB family.

The enzyme catalyses a lipid X + a UDP-2-N,3-O-bis[(3R)-3-hydroxyacyl]-alpha-D-glucosamine = a lipid A disaccharide + UDP + H(+). The protein operates within bacterial outer membrane biogenesis; LPS lipid A biosynthesis. Condensation of UDP-2,3-diacylglucosamine and 2,3-diacylglucosamine-1-phosphate to form lipid A disaccharide, a precursor of lipid A, a phosphorylated glycolipid that anchors the lipopolysaccharide to the outer membrane of the cell. The protein is Lipid-A-disaccharide synthase of Xanthomonas campestris pv. campestris (strain 8004).